The following is a 296-amino-acid chain: ATP synthase gamma chain (296 aa).

The protein belongs to the ATPase gamma chain family. F-type ATPases have 2 components, CF(1) - the catalytic core - and CF(0) - the membrane proton channel. CF(1) has five subunits: alpha(3), beta(3), gamma(1), delta(1), epsilon(1). CF(0) has three main subunits: a, b and c.

It localises to the cell inner membrane. Its function is as follows. Produces ATP from ADP in the presence of a proton gradient across the membrane. The gamma chain is believed to be important in regulating ATPase activity and the flow of protons through the CF(0) complex. In Gluconobacter oxydans (strain 621H) (Gluconobacter suboxydans), this protein is ATP synthase gamma chain.